A 146-amino-acid chain; its full sequence is Negative cofactor 2 complex subunit beta (146 aa).

Residues Phe124–Ser146 form a disordered region. Residues Ser135, Ser137, and Ser142 each carry the phosphoserine modification.

Component of the NC2 (negative cofactor 2) complex composed of BUR6 and NCB2. The NC2 complex associates with SPT15/TBP. Interacts with SPT15/TBP.

Its subcellular location is the nucleus. Its function is as follows. Component of the NC2 complex which represses RNA polymerase II transcription through binding to SPT15/TBP and thereby inhibiting the assembly of the preinitiation complex. The NC2 complex may also mediate transcriptional activation from TATA-driven promoters through association with SPT15/TBP. This is Negative cofactor 2 complex subunit beta (NCB2) from Saccharomyces cerevisiae (strain ATCC 204508 / S288c) (Baker's yeast).